A 685-amino-acid polypeptide reads, in one-letter code: Polyphosphate kinase (685 aa).

Residue asparagine 45 coordinates ATP. The Mg(2+) site is built by arginine 375 and arginine 405. The Phosphohistidine intermediate role is filled by histidine 435. ATP is bound by residues tyrosine 468, arginine 564, and histidine 592.

This sequence belongs to the polyphosphate kinase 1 (PPK1) family. Mg(2+) is required as a cofactor. In terms of processing, an intermediate of this reaction is the autophosphorylated ppk in which a phosphate is covalently linked to a histidine residue through a N-P bond.

It carries out the reaction [phosphate](n) + ATP = [phosphate](n+1) + ADP. Its function is as follows. Catalyzes the reversible transfer of the terminal phosphate of ATP to form a long-chain polyphosphate (polyP). This is Polyphosphate kinase from Neisseria meningitidis serogroup A / serotype 4A (strain DSM 15465 / Z2491).